Here is a 155-residue protein sequence, read N- to C-terminus: NADH-ubiquinone oxidoreductase chain 6 (155 aa).

4 helical membrane passes run 10–30 (ILAI…VLFV), 43–63 (LMGI…FLFI), 75–95 (GTIH…LDLS), and 133–153 (AIPM…AIAI).

The protein belongs to the complex I subunit 6 family.

The protein localises to the mitochondrion membrane. It carries out the reaction a ubiquinone + NADH + 5 H(+)(in) = a ubiquinol + NAD(+) + 4 H(+)(out). Its function is as follows. Core subunit of the mitochondrial membrane respiratory chain NADH dehydrogenase (Complex I) that is believed to belong to the minimal assembly required for catalysis. Complex I functions in the transfer of electrons from NADH to the respiratory chain. The immediate electron acceptor for the enzyme is believed to be ubiquinone. The sequence is that of NADH-ubiquinone oxidoreductase chain 6 (ND6) from Candida parapsilosis (Yeast).